The primary structure comprises 218 residues: MEPGFWHEKWQQQLIGFHQQDINPFLVKYWQTLALPADAKVFVPLCGKSLDMCFLAEQGHQVIGCELNELAVQQFFEENQLPMKKSAEGEHQHYHTEQVSLYQGDIFTLPQSITAKVSGFYDRAALIAWPESMRTQYAKQLAQLLPSGSVGLLVTLDYPQEALSGPPFAVSPTWVETHLSDDFEIQALACQDVLADNPRFVKKEVPWLNEAVYLLRRK.

Residues Trp-10, Leu-45, Glu-66, and Arg-123 each coordinate S-adenosyl-L-methionine.

The protein belongs to the class I-like SAM-binding methyltransferase superfamily. TPMT family.

Its subcellular location is the cytoplasm. It catalyses the reaction S-adenosyl-L-methionine + a thiopurine = S-adenosyl-L-homocysteine + a thiopurine S-methylether.. This is Thiopurine S-methyltransferase from Shewanella sp. (strain MR-7).